The primary structure comprises 868 residues: DNA topoisomerase 1 (868 aa).

The 146-residue stretch at 3-148 folds into the Toprim domain; sequence KSLVIVESPA…RFSRVVFNEI (146 aa). The Mg(2+) site is built by Glu-9 and Asp-117. The region spanning 164–581 is the Topo IA-type catalytic domain; the sequence is NMDRVNAQQT…QFFKDFSSQL (418 aa). Residues 198-203 are interaction with DNA; sequence SAGRVQ. The O-(5'-phospho-DNA)-tyrosine intermediate role is filled by Tyr-325. C4-type zinc fingers lie at residues 605–636, 667–694, and 716–739; these read CPTC…KERC, CTKC…NPNC, and CDKC…CTNC.

The protein belongs to the type IA topoisomerase family. In terms of assembly, monomer. Mg(2+) serves as cofactor.

It carries out the reaction ATP-independent breakage of single-stranded DNA, followed by passage and rejoining.. In terms of biological role, releases the supercoiling and torsional tension of DNA, which is introduced during the DNA replication and transcription, by transiently cleaving and rejoining one strand of the DNA duplex. Introduces a single-strand break via transesterification at a target site in duplex DNA. The scissile phosphodiester is attacked by the catalytic tyrosine of the enzyme, resulting in the formation of a DNA-(5'-phosphotyrosyl)-enzyme intermediate and the expulsion of a 3'-OH DNA strand. The free DNA strand then undergoes passage around the unbroken strand, thus removing DNA supercoils. Finally, in the religation step, the DNA 3'-OH attacks the covalent intermediate to expel the active-site tyrosine and restore the DNA phosphodiester backbone. This Haemophilus influenzae (strain ATCC 51907 / DSM 11121 / KW20 / Rd) protein is DNA topoisomerase 1.